The primary structure comprises 190 residues: Peptidyl-tRNA hydrolase (190 aa).

Tyrosine 14 provides a ligand contact to tRNA. Residue histidine 19 is the Proton acceptor of the active site. TRNA-binding residues include tyrosine 64 and asparagine 66.

Belongs to the PTH family. Monomer.

The protein resides in the cytoplasm. The catalysed reaction is an N-acyl-L-alpha-aminoacyl-tRNA + H2O = an N-acyl-L-amino acid + a tRNA + H(+). Its function is as follows. Hydrolyzes ribosome-free peptidyl-tRNAs (with 1 or more amino acids incorporated), which drop off the ribosome during protein synthesis, or as a result of ribosome stalling. Functionally, catalyzes the release of premature peptidyl moieties from peptidyl-tRNA molecules trapped in stalled 50S ribosomal subunits, and thus maintains levels of free tRNAs and 50S ribosomes. The chain is Peptidyl-tRNA hydrolase from Rhodopirellula baltica (strain DSM 10527 / NCIMB 13988 / SH1).